A 119-amino-acid chain; its full sequence is MSRSSDNDQYRSRNALIRRHIEKMDASLHVGTKEFDISKVSEVDSVDDLLIDNAARYLLKDWKGVGELVNGVEVALEYTAERGIALLKQNPELYWQILAEAASIAQGKEQQKQDTIKKP.

This Escherichia coli (strain K12) protein is Protein YdaY (ydaY).